Consider the following 45-residue polypeptide: Cytochrome b559 subunit beta (45 aa).

Residues 20–36 form a helical membrane-spanning segment; the sequence is WIAVHTLAVPTVFFLGA. Residue histidine 24 coordinates heme.

It belongs to the PsbE/PsbF family. As to quaternary structure, heterodimer of an alpha subunit and a beta subunit. PSII is composed of 1 copy each of membrane proteins PsbA, PsbB, PsbC, PsbD, PsbE, PsbF, PsbH, PsbI, PsbJ, PsbK, PsbL, PsbM, PsbT, PsbX, PsbY, PsbZ, Psb30/Ycf12, peripheral proteins PsbO, CyanoQ (PsbQ), PsbU, PsbV and a large number of cofactors. It forms dimeric complexes. Heme b serves as cofactor.

Its subcellular location is the cellular thylakoid membrane. In terms of biological role, this b-type cytochrome is tightly associated with the reaction center of photosystem II (PSII). PSII is a light-driven water:plastoquinone oxidoreductase that uses light energy to abstract electrons from H(2)O, generating O(2) and a proton gradient subsequently used for ATP formation. It consists of a core antenna complex that captures photons, and an electron transfer chain that converts photonic excitation into a charge separation. The polypeptide is Cytochrome b559 subunit beta (Nostoc sp. (strain PCC 7120 / SAG 25.82 / UTEX 2576)).